A 397-amino-acid chain; its full sequence is Nickel-cobalt-cadmium resistance protein NccB (397 aa).

The helical transmembrane segment at 10–30 threads the bilayer; the sequence is PSWPMIAGVAAAAALVGFGAA. A coiled-coil region spans residues 137–195; that stretch reads EAAAMAAERKVAQARADLARKTYERESSLFQQGVTPRQEMESARIALDVAQAEVQRAAT.

It belongs to the membrane fusion protein (MFP) (TC 8.A.1) family.

Its subcellular location is the cell inner membrane. Functionally, component of the NCC cation efflux system that confers resistance to nickel, cobalt and cadmium. In Alcaligenes xylosoxydans xylosoxydans (Achromobacter xylosoxidans), this protein is Nickel-cobalt-cadmium resistance protein NccB (nccB).